Consider the following 257-residue polypeptide: 7-carboxy-7-deazaguanine synthase (257 aa).

A disordered region spans residues 1 to 25 (MKSVDHPVDVLPAEHSAETPGDARA). Residues 39-41 (RQG) and R54 contribute to the substrate site. Residues 45–244 (LTGTESVFIR…AISRGYQYCD (200 aa)) enclose the Radical SAM core domain. [4Fe-4S] cluster-binding residues include C58, C62, and C65. T67 is a Mg(2+) binding site. Substrate is bound at residue T99. Residues G101 and 143 to 145 (SPK) contribute to the S-adenosyl-L-methionine site.

This sequence belongs to the radical SAM superfamily. 7-carboxy-7-deazaguanine synthase family. As to quaternary structure, homodimer. [4Fe-4S] cluster serves as cofactor. S-adenosyl-L-methionine is required as a cofactor. It depends on Mg(2+) as a cofactor.

The catalysed reaction is 6-carboxy-5,6,7,8-tetrahydropterin + H(+) = 7-carboxy-7-deazaguanine + NH4(+). It participates in purine metabolism; 7-cyano-7-deazaguanine biosynthesis. In terms of biological role, catalyzes the complex heterocyclic radical-mediated conversion of 6-carboxy-5,6,7,8-tetrahydropterin (CPH4) to 7-carboxy-7-deazaguanine (CDG), a step common to the biosynthetic pathways of all 7-deazapurine-containing compounds. In Rhodopirellula baltica (strain DSM 10527 / NCIMB 13988 / SH1), this protein is 7-carboxy-7-deazaguanine synthase.